Here is a 162-residue protein sequence, read N- to C-terminus: NADH-quinone oxidoreductase subunit I 2 (162 aa).

2 consecutive 4Fe-4S ferredoxin-type domains span residues 52–82 and 93–122; these read LRRY…IEAG and ERYD…EGPN. Cys-62, Cys-65, Cys-68, Cys-72, Cys-102, Cys-105, Cys-108, and Cys-112 together coordinate [4Fe-4S] cluster.

Belongs to the complex I 23 kDa subunit family. In terms of assembly, NDH-1 is composed of 14 different subunits. Subunits NuoA, H, J, K, L, M, N constitute the membrane sector of the complex. It depends on [4Fe-4S] cluster as a cofactor.

It localises to the cell inner membrane. The enzyme catalyses a quinone + NADH + 5 H(+)(in) = a quinol + NAD(+) + 4 H(+)(out). In terms of biological role, NDH-1 shuttles electrons from NADH, via FMN and iron-sulfur (Fe-S) centers, to quinones in the respiratory chain. The immediate electron acceptor for the enzyme in this species is believed to be ubiquinone. Couples the redox reaction to proton translocation (for every two electrons transferred, four hydrogen ions are translocated across the cytoplasmic membrane), and thus conserves the redox energy in a proton gradient. In Rhodopseudomonas palustris (strain BisA53), this protein is NADH-quinone oxidoreductase subunit I 2.